The primary structure comprises 32 residues: ATP synthase subunit O, mitochondrial (32 aa).

This sequence belongs to the ATPase delta chain family. F-type ATPases have 2 components, CF(1) - the catalytic core - and CF(0) - the membrane proton channel. CF(1) has five subunits: alpha(3), beta(3), gamma(1), delta(1), epsilon(1). CF(0) has three main subunits: a, b and c.

It is found in the mitochondrion. It localises to the mitochondrion inner membrane. Functionally, mitochondrial membrane ATP synthase (F(1)F(0) ATP synthase or Complex V) produces ATP from ADP in the presence of a proton gradient across the membrane which is generated by electron transport complexes of the respiratory chain. F-type ATPases consist of two structural domains, F(1) - containing the extramembraneous catalytic core and F(0) - containing the membrane proton channel, linked together by a central stalk and a peripheral stalk. During catalysis, ATP synthesis in the catalytic domain of F(1) is coupled via a rotary mechanism of the central stalk subunits to proton translocation. Part of the complex F(0) domain and the peripheric stalk, which acts as a stator to hold the catalytic alpha(3)beta(3) subcomplex and subunit a/ATP6 static relative to the rotary elements. In Spinacia oleracea (Spinach), this protein is ATP synthase subunit O, mitochondrial.